The following is an 82-amino-acid chain: RNA-binding protein Hfq (82 aa).

Residues 11–71 (DTFLNHVRKT…ISTIMPGAPI (61 aa)) enclose the Sm domain.

The protein belongs to the Hfq family. In terms of assembly, homohexamer.

In terms of biological role, RNA chaperone that binds small regulatory RNA (sRNAs) and mRNAs to facilitate mRNA translational regulation in response to envelope stress, environmental stress and changes in metabolite concentrations. Also binds with high specificity to tRNAs. This Bradyrhizobium diazoefficiens (strain JCM 10833 / BCRC 13528 / IAM 13628 / NBRC 14792 / USDA 110) protein is RNA-binding protein Hfq.